A 428-amino-acid chain; its full sequence is Nuclear hormone receptor family member nhr-44 (428 aa).

Positions serine 21–arginine 98 form a DNA-binding region, nuclear receptor. NR C4-type zinc fingers lie at residues cysteine 24–cysteine 44 and cysteine 61–cysteine 86. The NR LBD domain maps to serine 181–serine 427.

Belongs to the nuclear hormone receptor family.

The protein localises to the nucleus. Orphan nuclear receptor. This Caenorhabditis elegans protein is Nuclear hormone receptor family member nhr-44 (nhr-44).